We begin with the raw amino-acid sequence, 874 residues long: Alanine--tRNA ligase (874 aa).

Zn(2+) is bound by residues His564, His568, Cys665, and His669.

The protein belongs to the class-II aminoacyl-tRNA synthetase family. The cofactor is Zn(2+).

Its subcellular location is the cytoplasm. The catalysed reaction is tRNA(Ala) + L-alanine + ATP = L-alanyl-tRNA(Ala) + AMP + diphosphate. Its function is as follows. Catalyzes the attachment of alanine to tRNA(Ala) in a two-step reaction: alanine is first activated by ATP to form Ala-AMP and then transferred to the acceptor end of tRNA(Ala). Also edits incorrectly charged Ser-tRNA(Ala) and Gly-tRNA(Ala) via its editing domain. The sequence is that of Alanine--tRNA ligase from Burkholderia mallei (strain ATCC 23344).